Reading from the N-terminus, the 127-residue chain is Small ribosomal subunit protein uS11 (127 aa).

This sequence belongs to the universal ribosomal protein uS11 family. As to quaternary structure, part of the 30S ribosomal subunit. Interacts with proteins S7 and S18. Binds to IF-3.

Its function is as follows. Located on the platform of the 30S subunit, it bridges several disparate RNA helices of the 16S rRNA. Forms part of the Shine-Dalgarno cleft in the 70S ribosome. In Streptococcus suis (strain 98HAH33), this protein is Small ribosomal subunit protein uS11.